A 464-amino-acid polypeptide reads, in one-letter code: ATP-dependent protease ATPase subunit HslU (464 aa).

Residues Ile22, Gly64–Glu69, Asp275, Glu340, and Arg412 each bind ATP.

This sequence belongs to the ClpX chaperone family. HslU subfamily. In terms of assembly, a double ring-shaped homohexamer of HslV is capped on each side by a ring-shaped HslU homohexamer. The assembly of the HslU/HslV complex is dependent on binding of ATP.

Its subcellular location is the cytoplasm. In terms of biological role, ATPase subunit of a proteasome-like degradation complex; this subunit has chaperone activity. The binding of ATP and its subsequent hydrolysis by HslU are essential for unfolding of protein substrates subsequently hydrolyzed by HslV. HslU recognizes the N-terminal part of its protein substrates and unfolds these before they are guided to HslV for hydrolysis. This is ATP-dependent protease ATPase subunit HslU from Cytophaga hutchinsonii (strain ATCC 33406 / DSM 1761 / CIP 103989 / NBRC 15051 / NCIMB 9469 / D465).